Reading from the N-terminus, the 248-residue chain is 2,3-bisphosphoglycerate-dependent phosphoglycerate mutase (248 aa).

Substrate-binding positions include 9–16 (RHGHSEWN), 22–23 (TG), R61, 88–91 (ERHY), K99, 115–116 (RR), and 183–184 (GN). The Tele-phosphohistidine intermediate role is filled by H10. The active-site Proton donor/acceptor is the E88.

This sequence belongs to the phosphoglycerate mutase family. BPG-dependent PGAM subfamily.

It catalyses the reaction (2R)-2-phosphoglycerate = (2R)-3-phosphoglycerate. It functions in the pathway carbohydrate degradation; glycolysis; pyruvate from D-glyceraldehyde 3-phosphate: step 3/5. In terms of biological role, catalyzes the interconversion of 2-phosphoglycerate and 3-phosphoglycerate. The polypeptide is 2,3-bisphosphoglycerate-dependent phosphoglycerate mutase (Arthrobacter sp. (strain FB24)).